The primary structure comprises 400 residues: MAEDKGVKNMLEHLVKNLLVEDVEEIELRNVTIELDELELDLKTVAQTLPVEIWERILKPEVEEKEREVEVPEYEPPVEEYEGCVAEVQIGATRSDGGSRDRVVVLGGERAYFPFEEPRPNPPVVTFDVFDTPDVGIPGPIREELGDVIEDPVDWARTVVKRYGVDIVTVHLVSTSPKLHDAPVEEAMETLEDILDAVKVPIIVGGSGDPEKDVEVFVKAAEVCEGERVMLSSINEDMDFERVVEAAKEHGHVVLTFAPVDVNLMKSLNKKVLNRGLSKEDVVMDPTTCALGYGIEYTIDVMTRIRLAALKGDEHLQMPISSGSTNAWAAREAWMKEESWGPREYRGPLWEAVTATTVALCGADLLMMFHPWAVQVVMEAMEYMAEGRVTGDAYVTDVIA.

The protein belongs to the CdhD family. Heterodimer of delta and gamma chains. The ACDS complex is made up of alpha, epsilon, beta, gamma and delta chains with a probable stoichiometry of (alpha(2)epsilon(2))(4)-beta(8)-(gamma(1)delta(1))(8).

Part of a complex that catalyzes the reversible cleavage of acetyl-CoA, allowing autotrophic growth from CO(2). Probably maintains the overall quaternary structure of the ACDS complex. The chain is Acetyl-CoA decarbonylase/synthase complex subunit delta from Methanopyrus kandleri (strain AV19 / DSM 6324 / JCM 9639 / NBRC 100938).